Here is a 123-residue protein sequence, read N- to C-terminus: Large ribosomal subunit protein bL17 (123 aa).

The protein belongs to the bacterial ribosomal protein bL17 family. Part of the 50S ribosomal subunit. Contacts protein L32.

In Exiguobacterium sibiricum (strain DSM 17290 / CCUG 55495 / CIP 109462 / JCM 13490 / 255-15), this protein is Large ribosomal subunit protein bL17.